The following is a 215-amino-acid chain: Ribose-5-phosphate isomerase A (215 aa).

Residues 26 to 29, 79 to 82, and 92 to 95 contribute to the substrate site; these read TGST, DGAD, and KGGG. The Proton acceptor role is filled by E101. Residue K119 coordinates substrate.

The protein belongs to the ribose 5-phosphate isomerase family. In terms of assembly, homodimer.

It carries out the reaction aldehydo-D-ribose 5-phosphate = D-ribulose 5-phosphate. The protein operates within carbohydrate degradation; pentose phosphate pathway; D-ribose 5-phosphate from D-ribulose 5-phosphate (non-oxidative stage): step 1/1. Catalyzes the reversible conversion of ribose-5-phosphate to ribulose 5-phosphate. The polypeptide is Ribose-5-phosphate isomerase A (Xanthomonas oryzae pv. oryzae (strain PXO99A)).